Reading from the N-terminus, the 282-residue chain is Endo-1,4-beta-xylanase B (282 aa).

A signal peptide spans 1 to 39 (MGISSILLSALIAGGALALPAAEPVSFDIRDENITLARR). A glycan (N-linked (GlcNAc...) asparagine) is linked at asparagine 33. The GH11 domain maps to 40–219 (AEAINYNQDY…GSGSGQISLS (180 aa)). Glutamate 117 acts as the Nucleophile in catalysis. The active-site Proton donor is glutamate 206. The segment at 214 to 245 (GQISLSKGTGGGSTTTTPTGPTSTSTAPSSGG) is disordered. Low complexity predominate over residues 227–243 (TTTTPTGPTSTSTAPSS). The 37-residue stretch at 246–282 (TGAAQWGQCGGIGWTGPTTCVAPYTCKYENAYYSQCQ) folds into the CBM1 domain.

Belongs to the glycosyl hydrolase 11 (cellulase G) family.

The protein localises to the secreted. The enzyme catalyses Endohydrolysis of (1-&gt;4)-beta-D-xylosidic linkages in xylans.. The protein operates within glycan degradation; xylan degradation. Its activity is regulated as follows. Significantly inhibited by the wheat xylanase inhibiting protein I (XIP-I) and the proteinaceous endoxylanase Triticum aestivum xylanase inhibitors I (TAXI-I), but not TAXI-II. Its function is as follows. Endo-1,4-beta-xylanase involved in the hydrolysis of xylan, a major structural heterogeneous polysaccharide found in plant biomass representing the second most abundant polysaccharide in the biosphere, after cellulose. The sequence is that of Endo-1,4-beta-xylanase B (xynB) from Talaromyces funiculosus (Fruitlet core rot fungus).